The sequence spans 180 residues: Beta-lactoglobulin-1/B (180 aa).

Residues 1–18 (MKCLLLALGLALACGVQA) form the signal peptide. Cystine bridges form between cysteine 84-cysteine 178, cysteine 124-cysteine 137, and cysteine 124-cysteine 139.

Belongs to the calycin superfamily. Lipocalin family. Under physiological conditions beta-lactoglobulin exists as an equilibrium mixture of monomeric and dimeric forms. In terms of processing, alternate disulfide bonds occur in equal amounts.

Its subcellular location is the secreted. In terms of biological role, lactoglobulin is the primary component of whey, it binds retinol and is probably involved in the transport of that molecule. This Ovis aries (Sheep) protein is Beta-lactoglobulin-1/B.